The chain runs to 24 residues: Grammistin Pp 4b (24 aa).

Exists as aggregates of 3-4 molecules. Expressed by the skin glands.

The protein localises to the secreted. Thanks to its abundant amphiphilic alpha-helices, it may integrate into membrane phospholipids, leading to lysis of the membrane. Its hemolytic activity is inhibited by phospholipids, but not by cholesterol. Has antibacterial activity with a broad spectrum against various species of bacteria including both Gram-positive and Gram-negative groups. Also has ichthyotoxic activity. This is Grammistin Pp 4b from Pogonoperca punctata (Clown grouper).